Here is a 359-residue protein sequence, read N- to C-terminus: Endoglucanase (359 aa).

A signal peptide spans Met-1 to Ala-23. Glu-53 acts as the Proton donor in catalysis. The Nucleophile role is filled by Asp-110.

The protein belongs to the glycosyl hydrolase 8 (cellulase D) family.

It carries out the reaction Endohydrolysis of (1-&gt;4)-beta-D-glucosidic linkages in cellulose, lichenin and cereal beta-D-glucans.. Its function is as follows. The biological conversion of cellulose to glucose generally requires three types of hydrolytic enzymes: (1) Endoglucanases which cut internal beta-1,4-glucosidic bonds; (2) Exocellobiohydrolases that cut the disaccharide cellobiose from the non-reducing end of the cellulose polymer chain; (3) Beta-1,4-glucosidases which hydrolyze the cellobiose and other short cello-oligosaccharides to glucose. The polypeptide is Endoglucanase (Cellulomonas uda).